A 297-amino-acid chain; its full sequence is 5'-3' exonuclease (297 aa).

The 5'-3' exonuclease domain occupies 171–262 (EPDQIVDFKA…MKLEKELFAI (92 aa)).

Its function is as follows. 5'-3' exonuclease acting preferentially on double-stranded DNA. The polypeptide is 5'-3' exonuclease (polA) (Mycoplasmopsis pulmonis (strain UAB CTIP) (Mycoplasma pulmonis)).